Here is a 149-residue protein sequence, read N- to C-terminus: Hydrogenase expression/formation protein HupT (149 aa).

It belongs to the HupJ family.

The protein is Hydrogenase expression/formation protein HupT (hupT) of Azotobacter chroococcum mcd 1.